A 224-amino-acid polypeptide reads, in one-letter code: Holliday junction branch migration complex subunit RuvA (224 aa).

Residues Met-1–Ile-67 form a domain I region. Positions Glu-68–His-146 are domain II. The interval Glu-147–Asn-155 is flexible linker. Residues Gln-156–Thr-224 are domain III.

This sequence belongs to the RuvA family. In terms of assembly, homotetramer. Forms an RuvA(8)-RuvB(12)-Holliday junction (HJ) complex. HJ DNA is sandwiched between 2 RuvA tetramers; dsDNA enters through RuvA and exits via RuvB. An RuvB hexamer assembles on each DNA strand where it exits the tetramer. Each RuvB hexamer is contacted by two RuvA subunits (via domain III) on 2 adjacent RuvB subunits; this complex drives branch migration. In the full resolvosome a probable DNA-RuvA(4)-RuvB(12)-RuvC(2) complex forms which resolves the HJ.

It localises to the cytoplasm. Functionally, the RuvA-RuvB-RuvC complex processes Holliday junction (HJ) DNA during genetic recombination and DNA repair, while the RuvA-RuvB complex plays an important role in the rescue of blocked DNA replication forks via replication fork reversal (RFR). RuvA specifically binds to HJ cruciform DNA, conferring on it an open structure. The RuvB hexamer acts as an ATP-dependent pump, pulling dsDNA into and through the RuvAB complex. HJ branch migration allows RuvC to scan DNA until it finds its consensus sequence, where it cleaves and resolves the cruciform DNA. This is Holliday junction branch migration complex subunit RuvA from Prochlorococcus marinus (strain NATL1A).